We begin with the raw amino-acid sequence, 700 residues long: MESRLPKPSGLKKPQMPIKTVLPTDRIRAGLGGGAAGAGAFNVNANQTYCGNLLPPLSRDLNNLPQVLERRGGGARAASPEPMKLGHRAKLRRSRSACDINELRGNKRTAAAPSLPSIPSKVSRLGGALTVSSQRLVRPAAPSSITATAVKRPPVTRPAPRAAGGAAAKKPAGTGAAASSGAAAAAPKRIAPYDFKARFHDLLEKHKVLKTKYEKQTEDMGELESMPQQLEETQNKLIETESSLKNTQSDNECLQRQVKQHTAKIETITSTLGRTKEELSELQAIHEKVKTEHAALSTEVVHLRQRTEELLRCNEQQAAELETCKEQLFQSNMERKELHNTVMDLRGNIRVFCRIRPPLESEENRMCCTWTYHDESTVELQSIDAQAKSKMGQQIFSFDQVFHPLSSQSDIFEMVSPLIQSALDGYNICIFAYGQTGSGKTYTMDGVPESVGVIPRTVDLLFDSIRGYRNLGWEYEIKATFLEIYNEVLYDLLSNEQKDMEIRMAKNNKNDIYVSNITEETVLDPNHLRHLMHTAKMNRATASTAGNERSSRSHAVTKLELIGRHAEKQEISVGSINLVDLAGSESPKTSTRMTETKNINRSLSELTNVILALLQKQDHIPYRNSKLTHLLMPSLGGNSKTLMFINVSPFQDCFQESVKSLRFAASVNSCKMTKAKRNRYLNNSVANSSTQSNNSGSFDK.

Residues Ser-94 and Ser-96 each carry the phosphoserine modification. The segment at 141–185 (APSSITATAVKRPPVTRPAPRAAGGAAAKKPAGTGAAASSGAAAA) is disordered. Low complexity predominate over residues 149 to 185 (AVKRPPVTRPAPRAAGGAAAKKPAGTGAAASSGAAAA). A coiled-coil region spans residues 196–346 (KARFHDLLEK…ELHNTVMDLR (151 aa)). Residues 348–670 (NIRVFCRIRP…LRFAASVNSC (323 aa)) enclose the Kinesin motor domain. Position 434–441 (434–441 (GQTGSGKT)) interacts with ATP. Positions 664 to 668 (AASVN) are required for minus-end directionality. The tract at residues 681–700 (LNNSVANSSTQSNNSGSFDK) is disordered.

The protein belongs to the TRAFAC class myosin-kinesin ATPase superfamily. Kinesin family. NCD subfamily.

It localises to the cytoplasm. Its subcellular location is the cytoskeleton. The enzyme catalyses ATP + H2O = ADP + phosphate + H(+). In terms of biological role, minus-end-directed microtubule-based motor protein. Has ATPase activity. Required for normal chromosomal segregation in meiosis in females, and in early mitotic divisions of the embryo. The sequence is that of Protein claret segregational (ncd) from Drosophila melanogaster (Fruit fly).